The following is a 1423-amino-acid chain: Protein Shroom2 (1423 aa).

The segment at 1–101 (MRPSTVTSRI…PDHTLPKADA (101 aa)) is disordered. A compositionally biased stretch (low complexity) spans 8–27 (SRIWWSESSSSSSHDLSGSW). 2 stretches are compositionally biased toward polar residues: residues 28-69 (EHTS…NSSI) and 83-93 (GSFSTCSSTPD). Serine 103 is subject to Phosphoserine. The segment at 116–171 (ASRPGSSRQSQSTGDPQGLQDRPSSFLPRVPGNSSKSPRPEDNIEPKIATSGRSNF) is disordered. Positions 119–130 (PGSSRQSQSTGD) are enriched in polar residues. Phosphoserine occurs at positions 185, 197, and 291. Disordered regions lie at residues 300–357 (SYHG…VNQK), 586–630 (TSFQ…SAPR), 758–855 (EILS…SGGQ), 872–930 (PSSS…KLTD), and 1045–1085 (VETP…KEKT). The region spanning 575–677 (LKEAQTRVLK…SEPEKINEVG (103 aa)) is the ASD1 domain. The segment covering 761–771 (SEDRKVEKASE) has biased composition (basic and acidic residues). 4 positions are modified to phosphoserine: serine 806, serine 830, serine 831, and serine 833. Threonine 834 is subject to Phosphothreonine. Residues 872-885 (PSSSVLSSAQPQDS) are compositionally biased toward low complexity. Over residues 891 to 923 (DPTSPQPEAQLSSKCQHLQTSTMETSRSPSPQF) the composition is skewed to polar residues. 2 positions are modified to phosphoserine: serine 918 and serine 920. The segment covering 1054–1065 (PEPQPPSTPAPP) has biased composition (pro residues). Phosphoserine is present on residues serine 1072 and serine 1329. Positions 1092–1418 (EELAREIVGK…QLKCLFDSLQ (327 aa)) constitute an ASD2 domain.

This sequence belongs to the shroom family. As to quaternary structure, interacts with F-actin.

It localises to the apical cell membrane. It is found in the cell junction. The protein resides in the tight junction. Its subcellular location is the cytoplasm. The protein localises to the cytoskeleton. In terms of biological role, may be involved in endothelial cell morphology changes during cell spreading. In the retinal pigment epithelium, may regulate the biogenesis of melanosomes and promote their association with the apical cell surface by inducing gamma-tubulin redistribution. The protein is Protein Shroom2 (Shroom2) of Rattus norvegicus (Rat).